The chain runs to 70 residues: DNA-directed RNA polymerase subunit epsilon (70 aa).

The protein belongs to the RNA polymerase subunit epsilon family. RNAP is composed of a core of 2 alpha, a beta and a beta' subunit. The core is associated with a delta subunit, and at least one of epsilon or omega. When a sigma factor is associated with the core the holoenzyme is formed, which can initiate transcription.

It catalyses the reaction RNA(n) + a ribonucleoside 5'-triphosphate = RNA(n+1) + diphosphate. A non-essential component of RNA polymerase (RNAP). This Leuconostoc mesenteroides subsp. mesenteroides (strain ATCC 8293 / DSM 20343 / BCRC 11652 / CCM 1803 / JCM 6124 / NCDO 523 / NBRC 100496 / NCIMB 8023 / NCTC 12954 / NRRL B-1118 / 37Y) protein is DNA-directed RNA polymerase subunit epsilon.